The sequence spans 39 residues: Conotoxin Cl14.5 (39 aa).

Residues 1–16 (PVNEAGVERLFRALVG) constitute a propeptide that is removed on maturation. Pro-38 carries the proline amide modification.

In terms of processing, contains 2 disulfide bonds. As to expression, expressed by the venom duct.

The protein localises to the secreted. This is Conotoxin Cl14.5 from Californiconus californicus (California cone).